The primary structure comprises 53 residues: Rubredoxin (53 aa).

In terms of domain architecture, Rubredoxin-like spans 1–53; that stretch reads MQKYVCDICGYVYDPAVGDPDNGVAPGTAFADLPEDWVCPECGVSKDEFSPEA. Fe cation is bound by residues Cys-6, Cys-9, Cys-39, and Cys-42.

It belongs to the rubredoxin family. The cofactor is Fe(3+).

Its function is as follows. Rubredoxin is a small nonheme, iron protein lacking acid-labile sulfide. Its single Fe, chelated to 4 Cys, functions as an electron acceptor and may also stabilize the conformation of the molecule. The chain is Rubredoxin from Butyribacterium methylotrophicum.